Consider the following 231-residue polypeptide: Cutinase 2 (231 aa).

Residues 1–16 (MKFFALTTLLAATASA) form the signal peptide. Cysteines 48 and 126 form a disulfide. Ser-137 acts as the Nucleophile in catalysis. Cys-188 and Cys-195 are joined by a disulfide. Asp-192 is a catalytic residue. His-205 (proton donor/acceptor) is an active-site residue.

This sequence belongs to the cutinase family. The 2 disulfide bonds play a critical role in holding the catalytic residues in juxta-position; reduction of the disulfide bridges results in the complete inactivation of the enzyme.

The protein resides in the secreted. The enzyme catalyses cutin + H2O = cutin monomers.. In terms of biological role, catalyzes the hydrolysis of complex carboxylic polyesters found in the cell wall of plants. Degrades cutin, a macromolecule that forms the structure of the plant cuticle. Allows pathogenic fungi to penetrate through the cuticular barrier into the host plant during the initial stage of fungal infection. This is Cutinase 2 (CUT2) from Fusarium vanettenii (Neocosmospora pisi).